We begin with the raw amino-acid sequence, 142 residues long: Pro-opiomelanocortin (142 aa).

The propeptide occupies 1–8 (SEPGRREG). Val23 carries the valine amide modification. Ser41 is subject to Phosphoserine.

This sequence belongs to the POMC family. In terms of processing, specific enzymatic cleavages at paired basic residues yield the different active peptides. As to expression, ACTH and MSH are produced by the pituitary gland.

Its subcellular location is the secreted. Functionally, stimulates the adrenal glands to release cortisol. Anorexigenic peptide. Increases the pigmentation of skin by increasing melanin production in melanocytes. In terms of biological role, increases the pigmentation of skin by increasing melanin production in melanocytes. Its function is as follows. Endogenous orexigenic opiate. Functionally, endogenous opiate. The protein is Pro-opiomelanocortin (POMC) of Neovison vison (American mink).